A 56-amino-acid polypeptide reads, in one-letter code: Large ribosomal subunit protein bL33A (56 aa).

Belongs to the bacterial ribosomal protein bL33 family.

In Sorangium cellulosum (strain So ce56) (Polyangium cellulosum (strain So ce56)), this protein is Large ribosomal subunit protein bL33A.